Consider the following 740-residue polypeptide: Arf-GAP with coiled-coil, ANK repeat and PH domain-containing protein 1 (740 aa).

Residues 1–226 enclose the BAR domain; the sequence is MTVKLDFEEC…RKELGAQLHQ (226 aa). The interval 1–382 is required for formation of endosomal tubules when overexpressed with PIP5K1C; the sequence is MTVKLDFEEC…RGPGQGSGHL (382 aa). The 96-residue stretch at 265 to 360 folds into the PH domain; that stretch reads GLVMEGHLFK…WVSAVQSSIA (96 aa). One can recognise an Arf-GAP domain in the interval 405–527; sequence GHVVAQVQSV…KFLTKLPEIR (123 aa). A required for interaction with GULP1 region spans residues 405 to 740; sequence GHVVAQVQSV…SRRSHDLHTL (336 aa). A C4-type zinc finger spans residues 420–443; the sequence is CCDCREPAPEWASINLGVTLCIQC. Tyr485 carries the 3'-nitrotyrosine modification. The tract at residues 525–566 is prevents interaction with ITGB1 when S-554 is not phosphorylated; the sequence is EIRGRRGGRGRPRGQPPVPPKPSIRPRPGSLRSKPEPPSEDL. The tract at residues 525 to 581 is disordered; sequence EIRGRRGGRGRPRGQPPVPPKPSIRPRPGSLRSKPEPPSEDLGSLHPGALLFRASGH. The segment covering 538–549 has biased composition (pro residues); that stretch reads GQPPVPPKPSIR. Ser554 is modified (phosphoserine; by PKB). ANK repeat units follow at residues 606-635, 639-668, and 672-702; these read DNAT…NVNQ, AGRG…DLGA, and EGRD…EAEA.

Banana-shaped homodimer laterally assembling into tetramers, the tetramers further pack helically onto the membrane. Interacts with GTP-bound ARF6. Interacts with third cytoplasmic loop of SLC2A4/GLUT4. Interacts with CLTC. Interacts with GULP1. Forms a complex with GDP-bound ARF6 and GULP1. Interacts with ITGB1; required for ITGB1 recycling. Phosphorylation at Ser-554 by PKB is required for interaction with ITGB1, export of ITGB1 from recycling endosomes to the cell surface and ITGB1-dependent cell migration. As to expression, highest level in lung and spleen. Low level in heart, kidney, liver and pancreas.

Its subcellular location is the recycling endosome membrane. Its activity is regulated as follows. GAP activity stimulated by phosphatidylinositol 4,5-bisphosphate (PIP2) and phosphatidic acid. GTPase-activating protein (GAP) for ADP ribosylation factor 6 (ARF6) required for clathrin-dependent export of proteins from recycling endosomes to trans-Golgi network and cell surface. Required for regulated export of ITGB1 from recycling endosomes to the cell surface and ITGB1-dependent cell migration. The chain is Arf-GAP with coiled-coil, ANK repeat and PH domain-containing protein 1 (ACAP1) from Homo sapiens (Human).